Consider the following 150-residue polypeptide: MYHHYHAFQGRKLTDQERARVLEFQDSIHYSPRYSDDNYEYRHVMLPKAMLKVIPSDYFNSEVGTLRILTEDEWRGLGITQSLGWEHYECHAPEPHILLFKRPLNYEAELRAATAAAQQQQQQQQQQQQQQQQHQTQSISNDMQVPPQIS.

Over residues 115 to 137 (AAAQQQQQQQQQQQQQQQQHQTQ) the composition is skewed to low complexity. The interval 115 to 150 (AAAQQQQQQQQQQQQQQQQHQTQSISNDMQVPPQIS) is disordered.

Belongs to the CKS family. In terms of assembly, forms a stable but non-covalent complex with the CDC28 protein and with a cyclin.

In terms of biological role, binds to the catalytic subunit of the cyclin dependent kinase (CDC28) and is essential for its biological function. This is Cyclin-dependent kinases regulatory subunit from Saccharomyces cerevisiae (strain ATCC 204508 / S288c) (Baker's yeast).